Reading from the N-terminus, the 207-residue chain is Probable nicotinate-nucleotide adenylyltransferase (207 aa).

Belongs to the NadD family.

It carries out the reaction nicotinate beta-D-ribonucleotide + ATP + H(+) = deamido-NAD(+) + diphosphate. It participates in cofactor biosynthesis; NAD(+) biosynthesis; deamido-NAD(+) from nicotinate D-ribonucleotide: step 1/1. Catalyzes the reversible adenylation of nicotinate mononucleotide (NaMN) to nicotinic acid adenine dinucleotide (NaAD). The chain is Probable nicotinate-nucleotide adenylyltransferase from Desulfitobacterium hafniense (strain Y51).